Consider the following 206-residue polypeptide: RNA-free ribonuclease P (206 aa).

The disordered stretch occupies residues 187-206; sequence NLAGDDPGHAPPCGPDQPAG. Pro residues predominate over residues 195 to 206; that stretch reads HAPPCGPDQPAG.

The protein belongs to the HARP family.

The enzyme catalyses Endonucleolytic cleavage of RNA, removing 5'-extranucleotides from tRNA precursor.. Its function is as follows. RNA-free RNase P that catalyzes the removal of the 5'-leader sequence from pre-tRNA to produce the mature 5'-terminus. The protein is RNA-free ribonuclease P of Halorhodospira halophila (strain DSM 244 / SL1) (Ectothiorhodospira halophila (strain DSM 244 / SL1)).